We begin with the raw amino-acid sequence, 88 residues long: Small ribosomal subunit protein uS15 (88 aa).

This sequence belongs to the universal ribosomal protein uS15 family. Part of the 30S ribosomal subunit. Forms a bridge to the 50S subunit in the 70S ribosome, contacting the 23S rRNA.

In terms of biological role, one of the primary rRNA binding proteins, it binds directly to 16S rRNA where it helps nucleate assembly of the platform of the 30S subunit by binding and bridging several RNA helices of the 16S rRNA. Forms an intersubunit bridge (bridge B4) with the 23S rRNA of the 50S subunit in the ribosome. This chain is Small ribosomal subunit protein uS15, found in Acidobacterium capsulatum (strain ATCC 51196 / DSM 11244 / BCRC 80197 / JCM 7670 / NBRC 15755 / NCIMB 13165 / 161).